Consider the following 331-residue polypeptide: Ketol-acid reductoisomerase (NADP(+)) (331 aa).

Residues 2–182 (ARMYYDEDAN…GGTRAGVLET (181 aa)) form the KARI N-terminal Rossmann domain. NADP(+)-binding positions include 25–28 (YGSQ), serine 51, serine 53, and 83–86 (DEVQ). The active site involves histidine 108. Glycine 134 is an NADP(+) binding site. Residues 183–328 (TFREETETDL…KDLRAMFSWL (146 aa)) enclose the KARI C-terminal knotted domain. Mg(2+) contacts are provided by aspartate 191, glutamate 195, glutamate 227, and glutamate 231. Serine 252 serves as a coordination point for substrate.

Belongs to the ketol-acid reductoisomerase family. Requires Mg(2+) as cofactor.

The enzyme catalyses (2R)-2,3-dihydroxy-3-methylbutanoate + NADP(+) = (2S)-2-acetolactate + NADPH + H(+). The catalysed reaction is (2R,3R)-2,3-dihydroxy-3-methylpentanoate + NADP(+) = (S)-2-ethyl-2-hydroxy-3-oxobutanoate + NADPH + H(+). It participates in amino-acid biosynthesis; L-isoleucine biosynthesis; L-isoleucine from 2-oxobutanoate: step 2/4. The protein operates within amino-acid biosynthesis; L-valine biosynthesis; L-valine from pyruvate: step 2/4. Involved in the biosynthesis of branched-chain amino acids (BCAA). Catalyzes an alkyl-migration followed by a ketol-acid reduction of (S)-2-acetolactate (S2AL) to yield (R)-2,3-dihydroxy-isovalerate. In the isomerase reaction, S2AL is rearranged via a Mg-dependent methyl migration to produce 3-hydroxy-3-methyl-2-ketobutyrate (HMKB). In the reductase reaction, this 2-ketoacid undergoes a metal-dependent reduction by NADPH to yield (R)-2,3-dihydroxy-isovalerate. The protein is Ketol-acid reductoisomerase (NADP(+)) of Nostoc punctiforme (strain ATCC 29133 / PCC 73102).